We begin with the raw amino-acid sequence, 241 residues long: 1-(5-phosphoribosyl)-5-[(5-phosphoribosylamino)methylideneamino] imidazole-4-carboxamide isomerase (241 aa).

Aspartate 8 functions as the Proton acceptor in the catalytic mechanism. The Proton donor role is filled by aspartate 129.

Belongs to the HisA/HisF family.

The protein localises to the cytoplasm. It carries out the reaction 1-(5-phospho-beta-D-ribosyl)-5-[(5-phospho-beta-D-ribosylamino)methylideneamino]imidazole-4-carboxamide = 5-[(5-phospho-1-deoxy-D-ribulos-1-ylimino)methylamino]-1-(5-phospho-beta-D-ribosyl)imidazole-4-carboxamide. It participates in amino-acid biosynthesis; L-histidine biosynthesis; L-histidine from 5-phospho-alpha-D-ribose 1-diphosphate: step 4/9. The chain is 1-(5-phosphoribosyl)-5-[(5-phosphoribosylamino)methylideneamino] imidazole-4-carboxamide isomerase from Chloroflexus aurantiacus (strain ATCC 29364 / DSM 637 / Y-400-fl).